Reading from the N-terminus, the 2006-residue chain is Sodium channel protein type 2 subunit alpha (2006 aa).

A Phosphoserine modification is found at Ser-4. The interval Arg-28–Ser-61 is disordered. A Glycyl lysine isopeptide (Lys-Gly) (interchain with G-Cter in SUMO1) cross-link involves residue Lys-38. One copy of the I repeat lies at Ile-111–Gln-456. Residues Leu-130–Met-148 form a helical membrane-spanning segment. A helical transmembrane segment spans residues Lys-156–Ala-176. The helical transmembrane segment at Trp-191–Val-208 threads the bilayer. A helical membrane pass occupies residues Ala-215–Ile-231. The chain crosses the membrane as a helical span at residues Val-251–Phe-270. A disulfide bridge links Cys-278 with Cys-338. Asn-285, Asn-291, Asn-297, Asn-303, Asn-308, and Asn-340 each carry an N-linked (GlcNAc...) asparagine glycan. An intramembrane region (pore-forming) is located at residues Phe-370 to Leu-394. A helical membrane pass occupies residues Met-402–Ala-422. Phosphoserine occurs at positions 468, 471, 484, 526, 528, 531, 553, 554, 558, 573, 576, 589, 610, 623, 687, 688, and 722. The interval Ser-494 to Glu-529 is disordered. Residues Lys-511 to Glu-529 show a composition bias toward basic and acidic residues. The tract at residues Ser-589–Ile-635 is disordered. Basic and acidic residues predominate over residues Asp-596–Ser-610. An II repeat occupies Cys-742 to Gly-1014. A helical membrane pass occupies residues Phe-761–Met-779. The chain crosses the membrane as a helical span at residues Val-791–Lys-810. A helical transmembrane segment spans residues Asn-825–Val-844. A helical transmembrane segment spans residues Leu-847–Ser-864. The helical transmembrane segment at Ala-881 to Val-899 threads the bilayer. Cys-913 and Cys-919 form a disulfide bridge. The tract at residues Asp-918–Cys-919 is binds SCN2B. Residues Phe-929–Trp-949 constitute an intramembrane region (pore-forming). A disulfide bridge links Cys-951 with Cys-960. The chain crosses the membrane as a helical span at residues Val-963–Leu-983. Residues Glu-1121–Glu-1167 are disordered. Residues Glu-1156 to Glu-1167 show a composition bias toward acidic residues. An III repeat occupies Lys-1191 to Leu-1505. The helical transmembrane segment at Phe-1211 to Phe-1228 threads the bilayer. The helical transmembrane segment at Met-1242 to Leu-1260 threads the bilayer. The helical transmembrane segment at Trp-1275–Asn-1293 threads the bilayer. A helical transmembrane segment spans residues Ala-1302–Arg-1320. A helical membrane pass occupies residues Ile-1338–Val-1357. Cys-1367 and Cys-1387 form a disulfide bridge. The segment at residues Gly-1410–Ala-1431 is an intramembrane region (pore-forming). A helical transmembrane segment spans residues Tyr-1449 to Ile-1470. Ser-1507 is subject to Phosphoserine. An IV repeat occupies Ile-1514–Gln-1812. The helical transmembrane segment at Phe-1534–Val-1551 threads the bilayer. Residues Ile-1563–Leu-1581 traverse the membrane as a helical segment. Residues Gly-1594–Phe-1611 form a helical membrane-spanning segment. The chain crosses the membrane as a helical span at residues Leu-1625 to Ile-1641. Residues Leu-1661–Phe-1678 form a helical membrane-spanning segment. Residues Phe-1701–Pro-1723 constitute an intramembrane region (pore-forming). Cysteines 1732 and 1747 form a disulfide. The helical transmembrane segment at Ile-1754 to Ile-1776 threads the bilayer. An IQ domain is found at Glu-1906–Lys-1935. Position 1931 is a phosphoserine (Ser-1931). Residues Lys-1934–Asp-1965 are compositionally biased toward basic and acidic residues. The interval Lys-1934–Lys-2006 is disordered. 3 positions are modified to phosphothreonine: Thr-1944, Thr-1964, and Thr-1967. Phosphoserine is present on Ser-1972. Residues Thr-1980–Lys-2006 show a composition bias toward basic and acidic residues.

Belongs to the sodium channel (TC 1.A.1.10) family. Nav1.2/SCN2A subfamily. In terms of assembly, heterooligomer of a large alpha subunit and a smaller beta subunit. Heterooligomer with SCN2B or SCN4B; disulfide-linked. Interacts with NEDD4L. Interacts with CALM. Interacts with TMEM233. Post-translationally, sumoylated at Lys-38. Sumoylation is induced by hypoxia, increases voltage-gated sodium current and mediates the early response to acute hypoxia in neurons. Sumoylated SCN2A is located at the cell membrane. In terms of tissue distribution, expressed in brain (at protein level). Detected in hippocampus, cortex and brain stem.

It localises to the cell membrane. The catalysed reaction is Na(+)(in) = Na(+)(out). Functionally, mediates the voltage-dependent sodium ion permeability of excitable membranes. Assuming opened or closed conformations in response to the voltage difference across the membrane, the protein forms a sodium-selective channel through which Na(+) ions may pass in accordance with their electrochemical gradient. Implicated in the regulation of hippocampal replay occurring within sharp wave ripples (SPW-R) important for memory. This Mus musculus (Mouse) protein is Sodium channel protein type 2 subunit alpha.